The following is a 193-amino-acid chain: Adenine phosphoribosyltransferase (193 aa).

This sequence belongs to the purine/pyrimidine phosphoribosyltransferase family. Homodimer.

The protein resides in the cytoplasm. It carries out the reaction AMP + diphosphate = 5-phospho-alpha-D-ribose 1-diphosphate + adenine. The protein operates within purine metabolism; AMP biosynthesis via salvage pathway; AMP from adenine: step 1/1. Catalyzes a salvage reaction resulting in the formation of AMP, that is energically less costly than de novo synthesis. The chain is Adenine phosphoribosyltransferase from Bifidobacterium animalis subsp. lactis (strain AD011).